The chain runs to 215 residues: MESSNLYSKLLNAPKNTPVFLSQNLEADFIVKAYTFGLFPWTSKPVTWWCPDPRCVLNPNQIHIQKNMKKFINLYQIKLDYDFLKLITLCRDARSQSWIDDEFITTYYKLFTQGYAHSLELYENNELIGGIYGLILGKVFFGESMVNIKKNASKVAMIKLCDLLKPYDFIIDCQVYNQHLEFMGAHNISRKEFLNILKEKCNQESGFKNFKDLIT.

It belongs to the L/F-transferase family.

The protein resides in the cytoplasm. It catalyses the reaction N-terminal L-lysyl-[protein] + L-leucyl-tRNA(Leu) = N-terminal L-leucyl-L-lysyl-[protein] + tRNA(Leu) + H(+). It carries out the reaction N-terminal L-arginyl-[protein] + L-leucyl-tRNA(Leu) = N-terminal L-leucyl-L-arginyl-[protein] + tRNA(Leu) + H(+). The enzyme catalyses L-phenylalanyl-tRNA(Phe) + an N-terminal L-alpha-aminoacyl-[protein] = an N-terminal L-phenylalanyl-L-alpha-aminoacyl-[protein] + tRNA(Phe). In terms of biological role, functions in the N-end rule pathway of protein degradation where it conjugates Leu, Phe and, less efficiently, Met from aminoacyl-tRNAs to the N-termini of proteins containing an N-terminal arginine or lysine. The protein is Leucyl/phenylalanyl-tRNA--protein transferase of Campylobacter jejuni subsp. doylei (strain ATCC BAA-1458 / RM4099 / 269.97).